Reading from the N-terminus, the 202-residue chain is Recombination protein RecR (202 aa).

The C4-type zinc finger occupies Cys-61–Cys-76. The Toprim domain maps to Gly-84–Pro-179.

The protein belongs to the RecR family.

In terms of biological role, may play a role in DNA repair. It seems to be involved in an RecBC-independent recombinational process of DNA repair. It may act with RecF and RecO. In Bordetella bronchiseptica (strain ATCC BAA-588 / NCTC 13252 / RB50) (Alcaligenes bronchisepticus), this protein is Recombination protein RecR.